A 213-amino-acid polypeptide reads, in one-letter code: GTP cyclohydrolase 1 (213 aa).

Cysteine 104, histidine 107, and cysteine 175 together coordinate Zn(2+).

It belongs to the GTP cyclohydrolase I family. In terms of assembly, toroid-shaped homodecamer, composed of two pentamers of five dimers.

It carries out the reaction GTP + H2O = 7,8-dihydroneopterin 3'-triphosphate + formate + H(+). It functions in the pathway cofactor biosynthesis; 7,8-dihydroneopterin triphosphate biosynthesis; 7,8-dihydroneopterin triphosphate from GTP: step 1/1. The sequence is that of GTP cyclohydrolase 1 from Brucella abortus (strain 2308).